A 160-amino-acid chain; its full sequence is Photosystem II extrinsic protein V (160 aa).

A signal peptide spans 1-25; sequence MKRFFLVAIASVLFFFNTMVGSANA. Residues Cys62, Cys65, His66, and His117 each coordinate heme c.

It belongs to the cytochrome c family. PsbV subfamily. In terms of assembly, PSII is composed of 1 copy each of membrane proteins PsbA, PsbB, PsbC, PsbD, PsbE, PsbF, PsbH, PsbI, PsbJ, PsbK, PsbL, PsbM, PsbT, PsbX, PsbY, PsbZ, Psb30/Ycf12, peripheral proteins PsbO, CyanoQ (PsbQ), PsbU, PsbV and a large number of cofactors. It forms dimeric complexes. The cyanobacterial oxygen-evolving complex is composed of PsbO, CyanoQ (PsbQ), PsbV and PsbU. The cofactor is heme c.

The protein localises to the cellular thylakoid membrane. In terms of biological role, one of the extrinsic, lumenal subunits of photosystem II (PSII). PSII is a light-driven water plastoquinone oxidoreductase, using light energy to abstract electrons from H(2)O, generating a proton gradient subsequently used for ATP formation. The extrinsic proteins stabilize the structure of photosystem II oxygen-evolving complex (OEC), the ion environment of oxygen evolution and protect the OEC against heat-induced inactivation. Low-potential cytochrome c that plays a role in the OEC of PSII, required for normal function or stabilization of PSII. The chain is Photosystem II extrinsic protein V from Synechocystis sp. (strain ATCC 27184 / PCC 6803 / Kazusa).